A 304-amino-acid chain; its full sequence is DCN1-like protein 3 (304 aa).

2 disordered regions span residues 1–87 and 284–304; these read MGQC…EESS and EVEGRGTLSSGQEGLCPEEQT. Gly-2 carries N-myristoyl glycine lipidation. Positions 86-278 constitute a DCUN1 domain; that stretch reads SSLQRLEELF…LFDTFVEWEM (193 aa).

Part of a complex containing DCUN1D3, CUL3 and RBX1. Interacts (via the DCUN1 domain) with the unneddylated cullins: interacts with CUL1, CUL2, CUL3, CUL4A, CUL4B and CUL5; these interactions promote the cullin neddylation and the identity of the cullin dictates the affinity of the interaction. Interacts preferentially with CUL3; this interaction triggers the relocalization of CUL3 to the cell membrane where CUL3 is neddylated. Interacts (via DCUN1 domain) with RBX1. May also interact with regulators or subunits of cullin-RING ligases such as RNF7, ELOB and DDB1; these interactions are bridged by cullins. Interacts (via DCUN1 domain) with CAND1; this interaction is bridged by cullins and strongly inhibits cullin neddylation. These CAND-cullin-DCNL complexes can only be neddylated in the presence of a substrate adapter. Interacts (via DCUN1 domain) with the N-terminally acetylated form of UBE2M and UBE2F. In terms of tissue distribution, highest levels of expression are in the testis. Very low levels of expression in the heart, brain, skeletal muscle, kidney, liver, spleen, lung and ovary.

The protein localises to the cell membrane. It localises to the cytoplasm. It is found in the nucleus. Its subcellular location is the perinuclear region. Functionally, contributes to the neddylation of all cullins by transferring NEDD8 from N-terminally acetylated NEDD8-conjugating E2s enzyme to different cullin C-terminal domain-RBX complexes and may play a role in the cell cycle progression by regulating the SCF ubiquitin E3 ligase complex, after UV damage. At the cell membrane, can promote and as well inhibit cullins neddylation. The polypeptide is DCN1-like protein 3 (Mus musculus (Mouse)).